The following is a 176-amino-acid chain: T cell receptor beta constant 1 (176 aa).

The region spanning 8–117 is the Ig-like C1-type domain; that stretch reads PEVAVFEPSE…WTQDRAKPVT (110 aa). A disulfide bridge links Cys-30 with Cys-95. N-linked (GlcNAc...) asparagine glycosylation occurs at Asn-69. A connecting peptide region spans residues 130 to 144; sequence CGFTSVSYQQGVLSA. The chain crosses the membrane as a helical span at residues 150-170; it reads ILLGKATLYAVLVSALVLMAM. Residues 171–176 are Cytoplasmic-facing; it reads VKRKDF.

Alpha-beta TR is a heterodimer composed of an alpha and beta chain; disulfide-linked. The alpha-beta TR is associated with the transmembrane signaling CD3 coreceptor proteins to form the TR-CD3 (TcR or TCR). The assembly of alpha-beta TR heterodimers with CD3 occurs in the endoplasmic reticulum where a single alpha-beta TR heterodimer associates with one CD3D-CD3E heterodimer, one CD3G-CD3E heterodimer and one CD247 homodimer forming a stable octameric structure. CD3D-CD3E and CD3G-CD3E heterodimers preferentially associate with TR alpha and TR beta chains, respectively. The association of the CD247 homodimer is the last step of TcR assembly in the endoplasmic reticulum and is required for transport to the cell surface.

Its subcellular location is the cell membrane. In terms of biological role, constant region of T cell receptor (TR) beta chain. Alpha-beta T cell receptors are antigen specific receptors which are essential to the immune response and are present on the cell surface of T lymphocytes. Recognize peptide-major histocompatibility (MH) (pMH) complexes that are displayed by antigen presenting cells (APC), a prerequisite for efficient T cell adaptive immunity against pathogens. Binding of alpha-beta TR to pMH complex initiates TR-CD3 clustering on the cell surface and intracellular activation of LCK that phosphorylates the ITAM motifs of CD3G, CD3D, CD3E and CD247 enabling the recruitment of ZAP70. In turn, ZAP70 phosphorylates LAT, which recruits numerous signaling molecules to form the LAT signalosome. The LAT signalosome propagates signal branching to three major signaling pathways, the calcium, the mitogen-activated protein kinase (MAPK) kinase and the nuclear factor NF-kappa-B (NF-kB) pathways, leading to the mobilization of transcription factors that are critical for gene expression and essential for T cell growth and differentiation. The T cell repertoire is generated in the thymus, by V-(D)-J rearrangement. This repertoire is then shaped by intrathymic selection events to generate a peripheral T cell pool of self-MH restricted, non-autoaggressive T cells. Post-thymic interaction of alpha-beta TR with the pMH complexes shapes TR structural and functional avidity. This is T cell receptor beta constant 1 from Homo sapiens (Human).